A 186-amino-acid polypeptide reads, in one-letter code: Lipoprotein signal peptidase (186 aa).

The next 3 helical transmembrane spans lie at 11–31 (WIPLFAAGLVVVLDQCAKLLV), 44–64 (VLGDFVRIVHVYNVGAAFSIG), and 70–90 (VLRTLVLGIVPLIIMFLIVFS). Residues Asp128 and Asp150 contribute to the active site. Residues 145 to 165 (AFNIADAVIMTCGLLLIISFI) form a helical membrane-spanning segment.

This sequence belongs to the peptidase A8 family.

Its subcellular location is the cell inner membrane. The enzyme catalyses Release of signal peptides from bacterial membrane prolipoproteins. Hydrolyzes -Xaa-Yaa-Zaa-|-(S,diacylglyceryl)Cys-, in which Xaa is hydrophobic (preferably Leu), and Yaa (Ala or Ser) and Zaa (Gly or Ala) have small, neutral side chains.. It participates in protein modification; lipoprotein biosynthesis (signal peptide cleavage). Functionally, this protein specifically catalyzes the removal of signal peptides from prolipoproteins. The protein is Lipoprotein signal peptidase of Treponema pallidum (strain Nichols).